A 579-amino-acid polypeptide reads, in one-letter code: Glypican-3 (579 aa).

An N-terminal signal peptide occupies residues 1-24 (MAGTVRTACLLVAMLLGLGCLGQA). Q25 carries the post-translational modification Pyrrolidone carboxylic acid. Intrachain disulfides connect C34/C71, C64/C261, C72/C264, C196/C348, C251/C284, C273/C421, and C277/C409. N-linked (GlcNAc...) asparagine glycosylation is found at N123 and N240. At S351 the chain carries Phosphoserine. N-linked (GlcNAc...) asparagine glycosylation is present at N417. Residues S494 and S508 are each glycosylated (O-linked (Xyl...) (glycosaminoglycan) serine). The tract at residues 533-552 (DAPGNKQHGNQKDNEITTSH) is disordered. S553 is lipidated: GPI-anchor amidated serine. Positions 554–579 (VGNMPSPLKILISVAIYVACFFFLVH) are cleaved as a propeptide — removed in mature form.

This sequence belongs to the glypican family. In terms of assembly, heterodimer; disulfide-linked. Cleavage by a furin-like convertase results in production of alpha and beta chains which form a disulfide-linked heterodimer. Interacts with DPP4. Interacts with FGF2. Interacts with WNT5A. Also interacts with WNT3A and WNT7B. Interacts with hedgehog protein SHH; the heparan sulfate chains are not required for the interaction. Also interacts with hedgehog protein IHH. Interacts with CD81. Interacts with Wnt receptors FZD4, FZD7 and FZD8; the heparan sulfate chains are required for the interaction. Post-translationally, O-glycosylated; contains heparan sulfate and/or chondroitin sulfate. In terms of processing, cleaved intracellularly by a furin-like convertase to generate 2 subunits, alpha and beta, which remain associated through disulfide bonds and are associated with the cell surface via the GPI-anchor. This processing is essential for its role in inhibition of hedgehog signaling. A second proteolytic event may result in cleavage of the protein on the cell surface, separating it from the GPI-anchor and leading to its shedding from the cell surface. As to expression, in the developing limb, absent from the apical epidermal ridge at 11 dpc but highly expressed in the underlying mesenchyme. Expression in the mesenchyme at this stage is asymmetric with highest levels in the regions of the distal mesenchyme within the progress zone and within the proximal anterior and posterior limb bud. At later developmental stages including 12.5 and 13.5 dpc, expression is restricted to the interdigital webs and the regions of chondrocytic differentiation of the developing bones. In the embryonic kidney, expressed in both the ureteric bud and mesenchymal cells as early as 13.5 dpc. Expression at 16.5 dpc is similar to that at 13.5 dpc but decreases by 18.5 dpc.

It localises to the cell membrane. Its function is as follows. Cell surface proteoglycan. Negatively regulates the hedgehog signaling pathway when attached via the GPI-anchor to the cell surface by competing with the hedgehog receptor PTC1 for binding to hedgehog proteins. Binding to the hedgehog protein SHH triggers internalization of the complex by endocytosis and its subsequent lysosomal degradation. Positively regulates the canonical Wnt signaling pathway by binding to the Wnt receptor Frizzled and stimulating the binding of the Frizzled receptor to Wnt ligands. Positively regulates the non-canonical Wnt signaling pathway. Binds to CD81 which decreases the availability of free CD81 for binding to the transcriptional repressor HHEX, resulting in nuclear translocation of HHEX and transcriptional repression. Inhibits the dipeptidyl peptidase activity of DPP4. Plays a role in limb patterning and skeletal development by controlling the cellular response to BMP4. Modulates the effects of growth factors BMP2, BMP7 and FGF7 on renal branching morphogenesis. Required for coronary vascular development. Plays a role in regulating cell movements during gastrulation. The protein is Glypican-3 (Gpc3) of Mus musculus (Mouse).